The primary structure comprises 602 residues: UvrABC system protein C (602 aa).

A GIY-YIG domain is found at 17–94; it reads TTSGCYKMYS…IKEHKPDYNI (78 aa). Residues 199 to 234 enclose the UVR domain; the sequence is SKLLDEIEIKMKEVIKREDFESAIKLKETKRSLIEI.

This sequence belongs to the UvrC family. In terms of assembly, interacts with UvrB in an incision complex.

It localises to the cytoplasm. Functionally, the UvrABC repair system catalyzes the recognition and processing of DNA lesions. UvrC both incises the 5' and 3' sides of the lesion. The N-terminal half is responsible for the 3' incision and the C-terminal half is responsible for the 5' incision. The sequence is that of UvrABC system protein C from Borrelia turicatae (strain 91E135).